The primary structure comprises 247 residues: Ribonuclease PH (247 aa).

Phosphate is bound by residues Arg-87 and 125-127 (GTR).

Belongs to the RNase PH family. In terms of assembly, homohexameric ring arranged as a trimer of dimers.

The catalysed reaction is tRNA(n+1) + phosphate = tRNA(n) + a ribonucleoside 5'-diphosphate. In terms of biological role, phosphorolytic 3'-5' exoribonuclease that plays an important role in tRNA 3'-end maturation. Removes nucleotide residues following the 3'-CCA terminus of tRNAs; can also add nucleotides to the ends of RNA molecules by using nucleoside diphosphates as substrates, but this may not be physiologically important. Probably plays a role in initiation of 16S rRNA degradation (leading to ribosome degradation) during starvation. In Trichormus variabilis (strain ATCC 29413 / PCC 7937) (Anabaena variabilis), this protein is Ribonuclease PH.